The sequence spans 287 residues: ATP synthase gamma chain (287 aa).

It belongs to the ATPase gamma chain family. F-type ATPases have 2 components, CF(1) - the catalytic core - and CF(0) - the membrane proton channel. CF(1) has five subunits: alpha(3), beta(3), gamma(1), delta(1), epsilon(1). CF(0) has three main subunits: a, b and c.

The protein localises to the cell inner membrane. In terms of biological role, produces ATP from ADP in the presence of a proton gradient across the membrane. The gamma chain is believed to be important in regulating ATPase activity and the flow of protons through the CF(0) complex. This Enterobacter sp. (strain 638) protein is ATP synthase gamma chain.